The sequence spans 154 residues: SsrA-binding protein (154 aa).

This sequence belongs to the SmpB family.

It is found in the cytoplasm. Its function is as follows. Required for rescue of stalled ribosomes mediated by trans-translation. Binds to transfer-messenger RNA (tmRNA), required for stable association of tmRNA with ribosomes. tmRNA and SmpB together mimic tRNA shape, replacing the anticodon stem-loop with SmpB. tmRNA is encoded by the ssrA gene; the 2 termini fold to resemble tRNA(Ala) and it encodes a 'tag peptide', a short internal open reading frame. During trans-translation Ala-aminoacylated tmRNA acts like a tRNA, entering the A-site of stalled ribosomes, displacing the stalled mRNA. The ribosome then switches to translate the ORF on the tmRNA; the nascent peptide is terminated with the 'tag peptide' encoded by the tmRNA and targeted for degradation. The ribosome is freed to recommence translation, which seems to be the essential function of trans-translation. The sequence is that of SsrA-binding protein from Acetivibrio thermocellus (strain ATCC 27405 / DSM 1237 / JCM 9322 / NBRC 103400 / NCIMB 10682 / NRRL B-4536 / VPI 7372) (Clostridium thermocellum).